A 723-amino-acid polypeptide reads, in one-letter code: MSVMPSNLSLNGTSFFAENHSIMDKPNEQRTLNVFLFCSTFIIAFTVLLGSIYSLVSLLKLQNKSTISMIVTSLSIDDLISIVPVIIFMLTQWSSDALPQPLCTTSALIYLFQGISSNLKGSLIVSYNFYSINKTETMNCSASKRRVSMVWAILSIWIVSLLICILPLCGWGKYIPTTWGCFTDHASSYILFLFIVYSLCFCLLTVLSVPLTYQLLCSDEQQLLHVNYQEISRGYITPGTPAGCSTATPCLSPVDPVDKTLKHFQNACLSSKAVFRKGVAESSGLEPRCMNNAKSRSFTVGFAQKRFSLILALTKVILWLPMMIQMVVQHITGYQSFSFETLSFLLTLLAATVTPVFVLSEHWIHLPCGCIINCRRNSYAVSSEELKTKHRGFEFNLSFQHGYGIYRISPESHHHDGDGKSTSCHNLLVCEKPYEPPRGGGGGAALAELSTTDSARPGPAGLSATDSARPGPAGFSTTDSARPSAAGVRGEAASGLGRTVEGPERRLSHEEGHKPELTDWEWCRSKSERTPRQRSGGALAIPLCAFQGTVSLQAPTGKTLSLSTYEVSTEGQKITPTSKKIEVYRSKSVGHDPNPEECPNTFADTSVKIHLEVLEICDNEEALDTVSIISNISQSSTQVRSPSLRYSRKENRFVSCDLGETASYSLFIPSNNPDSDINITIPDTVEAHRQNSKKQHMERGGYQEEIQMLNKAYRKREEDGNSN.

Residues 1–31 lie on the Extracellular side of the membrane; the sequence is MSVMPSNLSLNGTSFFAENHSIMDKPNEQRT. N-linked (GlcNAc...) asparagine glycosylation is found at N7, N11, and N19. The chain crosses the membrane as a helical span at residues 32-52; sequence LNVFLFCSTFIIAFTVLLGSI. Topologically, residues 53 to 69 are cytoplasmic; it reads YSLVSLLKLQNKSTISM. The helical transmembrane segment at 70–90 threads the bilayer; that stretch reads IVTSLSIDDLISIVPVIIFML. The Extracellular portion of the chain corresponds to 91 to 106; the sequence is TQWSSDALPQPLCTTS. Residues C103 and C181 are joined by a disulfide bond. Residues 107–127 traverse the membrane as a helical segment; sequence ALIYLFQGISSNLKGSLIVSY. The Cytoplasmic segment spans residues 128–148; sequence NFYSINKTETMNCSASKRRVS. The chain crosses the membrane as a helical span at residues 149–169; sequence MVWAILSIWIVSLLICILPLC. Residues 170–188 are Extracellular-facing; sequence GWGKYIPTTWGCFTDHASS. A helical membrane pass occupies residues 189–209; the sequence is YILFLFIVYSLCFCLLTVLSV. Residues 210–306 lie on the Cytoplasmic side of the membrane; that stretch reads PLTYQLLCSD…SFTVGFAQKR (97 aa). A helical membrane pass occupies residues 307 to 327; it reads FSLILALTKVILWLPMMIQMV. The Extracellular portion of the chain corresponds to 328–338; it reads VQHITGYQSFS. The helical transmembrane segment at 339 to 359 threads the bilayer; that stretch reads FETLSFLLTLLAATVTPVFVL. Residues 360–723 are Cytoplasmic-facing; sequence SEHWIHLPCG…RKREEDGNSN (364 aa). Residues 451–513 are disordered; it reads TTDSARPGPA…ERRLSHEEGH (63 aa). Residues 501–513 are compositionally biased toward basic and acidic residues; that stretch reads EGPERRLSHEEGH.

It belongs to the G-protein coupled receptor 1 family. As to expression, specific expression in peripheral nervous system, including nerve growth factor-dependent sensory and sympathetic neurons, as well as enteric neurons.

It is found in the cell membrane. Its function is as follows. Orphan receptor. The sequence is that of Probable G-protein coupled receptor 149 (GPR149) from Gallus gallus (Chicken).